A 311-amino-acid polypeptide reads, in one-letter code: MDIVFMGTPDFAANILQKLIEEPQFNIKLVVTQPDKPVGRKQILTPPPVKEFALKFNLNVVQPDRLKGNEEFFEVLKKINPEVIVVVAYGKILPKEILQIPKYGCINVHASLLPEYRGAAPIQRVLMDGKNYTGITIMKMDEGLDTGDILLQEGIEIEQNDDVITLSKKLSELGAKLLIETLKNISNIVPVKQDATKATYAPPIDKKEGQISWDMSAVQIYNRFRALKIWPGIFTIYKGKLLKIHEMEIAKLDNLENVQNGTILGINETGILVKVKDGVIKLKELQLEGGRKMSARDFVNGYKIKKGDILS.

111–114 (SLLP) contributes to the (6S)-5,6,7,8-tetrahydrofolate binding site.

This sequence belongs to the Fmt family.

It catalyses the reaction L-methionyl-tRNA(fMet) + (6R)-10-formyltetrahydrofolate = N-formyl-L-methionyl-tRNA(fMet) + (6S)-5,6,7,8-tetrahydrofolate + H(+). Attaches a formyl group to the free amino group of methionyl-tRNA(fMet). The formyl group appears to play a dual role in the initiator identity of N-formylmethionyl-tRNA by promoting its recognition by IF2 and preventing the misappropriation of this tRNA by the elongation apparatus. This Caldicellulosiruptor saccharolyticus (strain ATCC 43494 / DSM 8903 / Tp8T 6331) protein is Methionyl-tRNA formyltransferase.